A 206-amino-acid polypeptide reads, in one-letter code: Small ribosomal subunit protein uS5 (206 aa).

Residues 1-15 show a composition bias toward polar residues; that stretch reads MTDTPTKQETQSNKD. Residues 1–50 form a disordered region; it reads MTDTPTKQETQSNKDNVPGAIPVEQKKNNRNDRKRNRRGDSKNLERDSDW. Residues 38–50 are compositionally biased toward basic and acidic residues; that stretch reads RGDSKNLERDSDW. Residues 50 to 113 enclose the S5 DRBM domain; it reads WQERVVQIRR…SDGKKNLVRV (64 aa).

Belongs to the universal ribosomal protein uS5 family. As to quaternary structure, part of the 30S ribosomal subunit. Contacts proteins S4 and S8.

With S4 and S12 plays an important role in translational accuracy. In terms of biological role, located at the back of the 30S subunit body where it stabilizes the conformation of the head with respect to the body. The protein is Small ribosomal subunit protein uS5 of Prochlorococcus marinus (strain MIT 9215).